Reading from the N-terminus, the 182-residue chain is uncharacterized protein (182 aa).

The first 26 residues, Met-1–Gly-26, serve as a signal peptide directing secretion. The tract at residues Tyr-68–Thr-90 is disordered. Residues Pro-74 to Thr-90 are compositionally biased toward low complexity.

This is an uncharacterized protein from Dryophytes versicolor (chameleon treefrog).